Consider the following 234-residue polypeptide: tRNA (guanine-N(1)-)-methyltransferase (234 aa).

S-adenosyl-L-methionine is bound by residues G115 and 135 to 140 (VGDYIL).

It belongs to the RNA methyltransferase TrmD family. In terms of assembly, homodimer.

It localises to the cytoplasm. The enzyme catalyses guanosine(37) in tRNA + S-adenosyl-L-methionine = N(1)-methylguanosine(37) in tRNA + S-adenosyl-L-homocysteine + H(+). In terms of biological role, specifically methylates guanosine-37 in various tRNAs. The protein is tRNA (guanine-N(1)-)-methyltransferase of Rickettsia akari (strain Hartford).